We begin with the raw amino-acid sequence, 356 residues long: Cobalt-precorrin-5B C(1)-methyltransferase (356 aa).

Belongs to the CbiD family.

The enzyme catalyses Co-precorrin-5B + S-adenosyl-L-methionine = Co-precorrin-6A + S-adenosyl-L-homocysteine. It functions in the pathway cofactor biosynthesis; adenosylcobalamin biosynthesis; cob(II)yrinate a,c-diamide from sirohydrochlorin (anaerobic route): step 6/10. Its function is as follows. Catalyzes the methylation of C-1 in cobalt-precorrin-5B to form cobalt-precorrin-6A. The protein is Cobalt-precorrin-5B C(1)-methyltransferase of Geobacter sp. (strain M21).